Reading from the N-terminus, the 454-residue chain is Chromosomal replication initiator protein DnaA (454 aa).

Positions 1-81 (MNNSLWQQCA…PNVVLKVGEA (81 aa)) are domain I, interacts with DnaA modulators. Residues 79 to 110 (GEASPTQRDSGSPQRAAATRRKTPNFSSGNTD) are disordered. The segment at 81–117 (ASPTQRDSGSPQRAAATRRKTPNFSSGNTDVEVPFES) is domain II. Over residues 82 to 91 (SPTQRDSGSP) the composition is skewed to polar residues. The tract at residues 118-334 (NIHPEYTFDN…GALNRVVANV (217 aa)) is domain III, AAA+ region. ATP-binding residues include glycine 162, glycine 164, lysine 165, and threonine 166. Positions 335–454 (QLTGRPITID…YRNLIRTLSS (120 aa)) are domain IV, binds dsDNA.

The protein belongs to the DnaA family. In terms of assembly, oligomerizes as a right-handed, spiral filament on DNA at oriC.

It localises to the cytoplasm. In terms of biological role, plays an essential role in the initiation and regulation of chromosomal replication. ATP-DnaA binds to the origin of replication (oriC) to initiate formation of the DNA replication initiation complex once per cell cycle. Binds the DnaA box (a 9 base pair repeat at the origin) and separates the double-stranded (ds)DNA. Forms a right-handed helical filament on oriC DNA; dsDNA binds to the exterior of the filament while single-stranded (ss)DNA is stabiized in the filament's interior. The ATP-DnaA-oriC complex binds and stabilizes one strand of the AT-rich DNA unwinding element (DUE), permitting loading of DNA polymerase. After initiation quickly degrades to an ADP-DnaA complex that is not apt for DNA replication. Binds acidic phospholipids. The polypeptide is Chromosomal replication initiator protein DnaA (Idiomarina loihiensis (strain ATCC BAA-735 / DSM 15497 / L2-TR)).